Here is a 61-residue protein sequence, read N- to C-terminus: Large ribosomal subunit protein uL30 (61 aa).

This sequence belongs to the universal ribosomal protein uL30 family. As to quaternary structure, part of the 50S ribosomal subunit.

This chain is Large ribosomal subunit protein uL30, found in Corynebacterium efficiens (strain DSM 44549 / YS-314 / AJ 12310 / JCM 11189 / NBRC 100395).